Consider the following 828-residue polypeptide: Kinesin-associated protein 3 (828 aa).

3 ARM repeats span residues 332 to 372 (YVEN…NLSF), 373 to 411 (DTDLRGKMIKLGMLPKFVELLANDNHRLVVLCVLYHVSQ), and 577 to 611 (DDSCAAMLAKSGIIQSLIELLNAKQEDDEIVCQIV).

In terms of assembly, heterotrimer of a 115 kDa subunit (KAP115) and two kinesin-like subunits of 95 kDa (KRP95) and 85 kDa (KRP85).

In terms of biological role, binds to the tail domain of the KRP85/KRP95 heterodimer to form a heterotrimeric kinesin-II complex and may regulate the spindle vesicle targeting of this complex. The sequence is that of Kinesin-associated protein 3 (KAP115) from Strongylocentrotus purpuratus (Purple sea urchin).